Here is a 247-residue protein sequence, read N- to C-terminus: MARKNLGRRKIELVKMTNESNLQVTFSKRRSGLFKKGSELCTLCDAEIAIIVFSPSGKAYSFGHPNVNKLLDHSLGRVIRHNNTNFAESRTKLRIQMLNESLTEVMAEKEKEQETKQSIVQNERENKDAEKWWRNSPTELNLAQSTSMKCDLEALKKEVDEKVAQLHHRNLNFYVGSSSNVAAPAAVSGGNISTNHGFFDQNGNSTSAPTLPFGFNVMNRTPAGYNSYQLQNQEVKQVHPQYWARYY.

The 61-residue stretch at 6 to 66 folds into the MADS-box domain; that stretch reads LGRRKIELVK…GKAYSFGHPN (61 aa). Residues 91–168 are a coiled coil; that stretch reads TKLRIQMLNE…VDEKVAQLHH (78 aa).

As to expression, expressed in roots, leaves and shoot apices.

The protein localises to the nucleus. In terms of biological role, probable transcription factor that may function as a floral promoter operating upstream of known floral activators in the autonomous pathway. The chain is Agamous-like MADS-box protein AGL28 from Arabidopsis thaliana (Mouse-ear cress).